We begin with the raw amino-acid sequence, 1441 residues long: Pleiotropic drug resistance protein TUR2 (1441 aa).

The ABC transporter 1 domain maps to 158–430; sequence LSALHLMPSG…FESMGFKCPE (273 aa). 191–198 contacts ATP; that stretch reads GPPGAGKT. In terms of domain architecture, ABC transmembrane type-2 1 spans 508-721; the sequence is ELLKACIDRE…AQNAIAVNEF (214 aa). The next 6 helical transmembrane spans lie at 526-546, 559-579, 614-634, 646-666, 671-691, and 756-776; these read FVYIFKVVQLIVLALIAMTVF, ATIFFGAMFLGLVTHLFNGFA, IPISFVECGVWIAMTYYVIGF, LLLVLISQVASGLFRLLAAVG, VADTFGAFAQLVLLVLGGFII, and IGVGALIGYMVLFNFLFILFL. Residues 843 to 1095 enclose the ABC transporter 2 domain; sequence ITFDNVKYSV…HLIKYFESID (253 aa). 888–895 is a binding site for ATP; it reads GVSGRGKT. An ABC transmembrane type-2 2 domain is found at 1168-1382; the sequence is MQCLACLWKQ…TLYGLVVSQF (215 aa). 7 helical membrane passes run 1187 to 1207, 1215 to 1235, 1275 to 1295, 1302 to 1322, 1332 to 1352, 1363 to 1383, and 1413 to 1433; these read YTATRLFFTVVIALIFGTIFW, TSLDLINAMGSMYAAVLFIGI, VPHILVQTLLYGLLVYSMIGF, FLWYMFFMFFTFLYFTYYGMM, IAAIVAAAFYAIWNIFAGFII, WYYWACPVAWTLYGLVVSQFG, and VVGVMVVVFTVLFASIFAFSI.

It belongs to the ABC transporter superfamily. ABCG family. PDR (TC 3.A.1.205) subfamily. As to expression, ubiquitous.

The protein localises to the cell membrane. Its function is as follows. May be a general defense protein. Seems involved in turion (dormant buds) formation. Confers resistance to the diterpenoid antifungal agent sclareol. The protein is Pleiotropic drug resistance protein TUR2 (TUR2) of Spirodela polyrhiza (Giant duckweed).